A 147-amino-acid polypeptide reads, in one-letter code: Hemoglobin subunit delta (147 aa).

The region spanning 3 to 147 (HLTPEEKAAV…VATALAHKYH (145 aa)) is the Globin domain. Residues His64 and His93 each contribute to the heme b site.

This sequence belongs to the globin family. In terms of assembly, heterotetramer of two delta chains and two alpha chains. As to expression, red blood cells.

The polypeptide is Hemoglobin subunit delta (HBD) (Ateles geoffroyi (Black-handed spider monkey)).